Reading from the N-terminus, the 338-residue chain is Peroxidase 15 (338 aa).

The signal sequence occupies residues 1–22 (MARIGSFLIILYLIYALTLCIC). Cystine bridges form between cysteine 45–cysteine 125, cysteine 78–cysteine 83, cysteine 131–cysteine 332, and cysteine 210–cysteine 242. The active-site Proton acceptor is histidine 76. Residues aspartate 77, valine 80, glycine 82, aspartate 84, and serine 86 each coordinate Ca(2+). Residue proline 173 participates in substrate binding. The N-linked (GlcNAc...) asparagine glycan is linked to asparagine 176. A heme b-binding site is contributed by histidine 203. Residue threonine 204 participates in Ca(2+) binding. Residues asparagine 219 and asparagine 250 are each glycosylated (N-linked (GlcNAc...) asparagine). 3 residues coordinate Ca(2+): aspartate 255, serine 258, and aspartate 263.

This sequence belongs to the peroxidase family. Classical plant (class III) peroxidase subfamily. Heme b serves as cofactor. The cofactor is Ca(2+).

The protein resides in the secreted. The enzyme catalyses 2 a phenolic donor + H2O2 = 2 a phenolic radical donor + 2 H2O. Its function is as follows. Removal of H(2)O(2), oxidation of toxic reductants, biosynthesis and degradation of lignin, suberization, auxin catabolism, response to environmental stresses such as wounding, pathogen attack and oxidative stress. These functions might be dependent on each isozyme/isoform in each plant tissue. In Arabidopsis thaliana (Mouse-ear cress), this protein is Peroxidase 15 (PER15).